The following is a 274-amino-acid chain: Large ribosomal subunit protein uL2 (274 aa).

The segment at 221–274 (RGTAMNPVDHPHGGGEGRNFGKHPVTPWGVQTKGKKTRSNKRTDKFIVRRRSKK) is disordered.

This sequence belongs to the universal ribosomal protein uL2 family. As to quaternary structure, part of the 50S ribosomal subunit. Forms a bridge to the 30S subunit in the 70S ribosome.

In terms of biological role, one of the primary rRNA binding proteins. Required for association of the 30S and 50S subunits to form the 70S ribosome, for tRNA binding and peptide bond formation. It has been suggested to have peptidyltransferase activity; this is somewhat controversial. Makes several contacts with the 16S rRNA in the 70S ribosome. The polypeptide is Large ribosomal subunit protein uL2 (Yersinia pseudotuberculosis serotype O:1b (strain IP 31758)).